Consider the following 146-residue polypeptide: UPF0260 protein Sbal_1871 (146 aa).

It belongs to the UPF0260 family.

The polypeptide is UPF0260 protein Sbal_1871 (Shewanella baltica (strain OS155 / ATCC BAA-1091)).